The primary structure comprises 179 residues: ATP-dependent protease subunit HslV (179 aa).

Thr7 is a catalytic residue. Residues Gly162, Cys165, and Thr168 each contribute to the Na(+) site.

This sequence belongs to the peptidase T1B family. HslV subfamily. A double ring-shaped homohexamer of HslV is capped on each side by a ring-shaped HslU homohexamer. The assembly of the HslU/HslV complex is dependent on binding of ATP.

The protein localises to the cytoplasm. The catalysed reaction is ATP-dependent cleavage of peptide bonds with broad specificity.. Its activity is regulated as follows. Allosterically activated by HslU binding. Its function is as follows. Protease subunit of a proteasome-like degradation complex believed to be a general protein degrading machinery. The chain is ATP-dependent protease subunit HslV from Aromatoleum aromaticum (strain DSM 19018 / LMG 30748 / EbN1) (Azoarcus sp. (strain EbN1)).